We begin with the raw amino-acid sequence, 425 residues long: Inositol hexakisphosphate kinase 2 (425 aa).

ATP is bound by residues 206 to 208 (ENL) and aspartate 219. Substrate-binding positions include 215–223 (PCVLDLKMG), lysine 221, and 235–242 (KAANQIRK). Aspartate 382 is a binding site for ATP. Histidine 385 provides a ligand contact to substrate.

Belongs to the inositol phosphokinase (IPK) family. As to expression, detected in kidney, intestine, liver and heart.

It is found in the nucleus. The enzyme catalyses 1D-myo-inositol hexakisphosphate + ATP = 5-diphospho-1D-myo-inositol 1,2,3,4,6-pentakisphosphate + ADP. It participates in phospholipid metabolism; phosphatidylinositol metabolism. Its function is as follows. Converts inositol hexakisphosphate (InsP6) to diphosphoinositol pentakisphosphate (InsP7/PP-InsP5). The sequence is that of Inositol hexakisphosphate kinase 2 (IP6K2) from Oryctolagus cuniculus (Rabbit).